Reading from the N-terminus, the 309-residue chain is Probable manganese-dependent inorganic pyrophosphatase (309 aa).

Mn(2+)-binding residues include His-9, Asp-13, Asp-15, Asp-75, His-97, and Asp-149.

Belongs to the PPase class C family. Mn(2+) serves as cofactor.

The protein localises to the cytoplasm. It catalyses the reaction diphosphate + H2O = 2 phosphate + H(+). This chain is Probable manganese-dependent inorganic pyrophosphatase, found in Exiguobacterium sp. (strain ATCC BAA-1283 / AT1b).